Consider the following 353-residue polypeptide: uncharacterized protein (353 aa).

The HTH luxR-type domain occupies 18–83 (NIEFPCLLSE…TLWRDVFLRF (66 aa)). Positions 42 to 61 (VNEISKRRNRSIKTVSCQKM) form a DNA-binding region, H-T-H motif. One can recognise an EAL domain in the interval 98–350 (NSSVLPVVSS…AFVRKLLASL (253 aa)).

This is an uncharacterized protein from Escherichia coli (strain K12).